The following is a 208-amino-acid chain: Small ribosomal subunit protein uS4 (208 aa).

Residues 98–158 form the S4 RNA-binding domain; that stretch reads CRLDTVSYRM…EKAKNHLRIK (61 aa).

This sequence belongs to the universal ribosomal protein uS4 family. As to quaternary structure, part of the 30S ribosomal subunit. Contacts protein S5. The interaction surface between S4 and S5 is involved in control of translational fidelity.

Its function is as follows. One of the primary rRNA binding proteins, it binds directly to 16S rRNA where it nucleates assembly of the body of the 30S subunit. In terms of biological role, with S5 and S12 plays an important role in translational accuracy. This is Small ribosomal subunit protein uS4 from Nitrosospira multiformis (strain ATCC 25196 / NCIMB 11849 / C 71).